Consider the following 158-residue polypeptide: C-type lectin BiL (158 aa).

Residues 1-23 (MGRFIFVSFGLLVVFLSLSGAKG) form the signal peptide. Intrachain disulfides connect Cys-26–Cys-37, Cys-54–Cys-154, Cys-61–Cys-156, and Cys-129–Cys-146. One can recognise a C-type lectin domain in the interval 33–155 (MNGLCYKIFD…CESKNAFLCQ (123 aa)). Gln-119, Asp-121, Glu-127, Asn-142, and Asp-143 together coordinate Ca(2+). The Galactose-binding signature appears at 119-121 (QPD).

In terms of assembly, homodimer; disulfide-linked. Expressed by the venom gland.

It localises to the secreted. In terms of biological role, lectin with a hemagglutinating activity that is inhibited by galactose, lactose and EDTA. Is calcium-dependent. Shows effects on the renal function of isolated perfused rat kidneys by increasing both perfusion pressure (PP) and renal vascular resistance (RVR). In addition, the urinary flow and glomerular filtration rate (GFR) decreases significantly. The changes observed may reflect direct injury to the glomerular and tubular renal cells, and the rise in permeability in the glomerular endothelial cells, may be the effect of interactions of C-type lectin with endothelial cells or due to release of other mediators by mesangial, tubular and endothelial cells. The chain is C-type lectin BiL from Bothrops insularis (Golden lancehead).